Here is a 100-residue protein sequence, read N- to C-terminus: Ubiquitin-related modifier 1 homolog (100 aa).

Gly100 is subject to 1-thioglycine. A Glycyl lysine isopeptide (Gly-Lys) (interchain with K-? in acceptor proteins) cross-link involves residue Gly100.

The protein belongs to the URM1 family. In terms of processing, C-terminal thiocarboxylation occurs in 2 steps, it is first acyl-adenylated (-COAMP) via the hesA/moeB/thiF part of the MOCS3 homolog, then thiocarboxylated (-COSH) via the rhodanese domain of the MOCS3 homolog.

It localises to the cytoplasm. It participates in tRNA modification; 5-methoxycarbonylmethyl-2-thiouridine-tRNA biosynthesis. In terms of biological role, acts as a sulfur carrier required for 2-thiolation of mcm(5)S(2)U at tRNA wobble positions of cytosolic tRNA(Lys), tRNA(Glu) and tRNA(Gln). Serves as sulfur donor in tRNA 2-thiolation reaction by being thiocarboxylated (-COSH) at its C-terminus by MOCS3. The sulfur is then transferred to tRNA to form 2-thiolation of mcm(5)S(2)U. Also acts as a ubiquitin-like protein (UBL) that is covalently conjugated via an isopeptide bond to lysine residues of target proteins. The thiocarboxylated form serves as substrate for conjugation and oxidative stress specifically induces the formation of UBL-protein conjugates. The sequence is that of Ubiquitin-related modifier 1 homolog from Caenorhabditis elegans.